A 428-amino-acid chain; its full sequence is Glycine reductase complex component B subunits alpha and beta (428 aa).

Cys242 acts as the Schiff-base intermediate with substrate; via pyruvic acid in catalysis. Cys242 carries the post-translational modification Pyruvic acid (Cys).

Heterohexamer of two alpha, two beta and two gamma subunits. Component of the glycine reductase complex, together with components A and C. PB is substrate specific. In terms of processing, the peptide chain is cleaved into beta and alpha chains, and the alpha chain N-terminal cysteine is deaminated and oxidized to form a reactive pyruvoyl group.

It carries out the reaction acetyl phosphate + [thioredoxin]-disulfide + NH4(+) + H2O = [thioredoxin]-dithiol + glycine + phosphate + H(+). In terms of biological role, in the first step of glycine reductase, the substrate is bound to component PB via a Schiff base intermediate. Then the PB-activated substrate is nucleophilically attacked by the selenol anion of component PA to transform it to a carboxymethylated selenoether and the respective amine. By action of component PC, acetyl phosphate is formed, leaving component PA in its oxidized state. Finally component PA becomes reduced by the thioredoxin system to start a new catalytic cycle of reductive deamination. This chain is Glycine reductase complex component B subunits alpha and beta (grdE), found in Peptoclostridium acidaminophilum (Eubacterium acidaminophilum).